Here is a 370-residue protein sequence, read N- to C-terminus: Ganglioside-induced differentiation-associated protein 1-like 1 (370 aa).

A GST N-terminal domain is found at 45-129 (ESLVLYHWTQ…YVERTFTGEH (85 aa)). Residues 177–344 (PKYATAEIRR…RLVKRKPPSF (168 aa)) enclose the GST C-terminal domain.

Belongs to the GST superfamily.

In Mus musculus (Mouse), this protein is Ganglioside-induced differentiation-associated protein 1-like 1 (Gdap1l1).